Here is a 396-residue protein sequence, read N- to C-terminus: Putative nickel insertion protein (396 aa).

Belongs to the LarC family.

This chain is Putative nickel insertion protein, found in Wolinella succinogenes (strain ATCC 29543 / DSM 1740 / CCUG 13145 / JCM 31913 / LMG 7466 / NCTC 11488 / FDC 602W) (Vibrio succinogenes).